A 254-amino-acid polypeptide reads, in one-letter code: 4-hydroxy-tetrahydrodipicolinate reductase (254 aa).

7–12 is a binding site for NAD(+); that stretch reads GASGRI. R35 serves as a coordination point for NADP(+). NAD(+)-binding positions include 91-93 and 115-118; these read GTT and AHNM. The Proton donor/acceptor role is filled by H147. Residue H148 coordinates (S)-2,3,4,5-tetrahydrodipicolinate. Catalysis depends on K151, which acts as the Proton donor. (S)-2,3,4,5-tetrahydrodipicolinate is bound at residue 157–158; sequence GT.

It belongs to the DapB family.

The protein localises to the cytoplasm. It carries out the reaction (S)-2,3,4,5-tetrahydrodipicolinate + NAD(+) + H2O = (2S,4S)-4-hydroxy-2,3,4,5-tetrahydrodipicolinate + NADH + H(+). The catalysed reaction is (S)-2,3,4,5-tetrahydrodipicolinate + NADP(+) + H2O = (2S,4S)-4-hydroxy-2,3,4,5-tetrahydrodipicolinate + NADPH + H(+). It participates in amino-acid biosynthesis; L-lysine biosynthesis via DAP pathway; (S)-tetrahydrodipicolinate from L-aspartate: step 4/4. In terms of biological role, catalyzes the conversion of 4-hydroxy-tetrahydrodipicolinate (HTPA) to tetrahydrodipicolinate. This chain is 4-hydroxy-tetrahydrodipicolinate reductase, found in Helicobacter pylori (strain HPAG1).